We begin with the raw amino-acid sequence, 283 residues long: Protein/nucleic acid deglycase HchA (283 aa).

Zn(2+) contacts are provided by histidine 86, glutamate 91, and histidine 123. Cysteine 185 functions as the Nucleophile in the catalytic mechanism.

The protein belongs to the peptidase C56 family. HchA subfamily. As to quaternary structure, homodimer.

The protein localises to the cytoplasm. It catalyses the reaction N(omega)-(1-hydroxy-2-oxopropyl)-L-arginyl-[protein] + H2O = lactate + L-arginyl-[protein] + H(+). The catalysed reaction is N(6)-(1-hydroxy-2-oxopropyl)-L-lysyl-[protein] + H2O = lactate + L-lysyl-[protein] + H(+). The enzyme catalyses S-(1-hydroxy-2-oxopropyl)-L-cysteinyl-[protein] + H2O = lactate + L-cysteinyl-[protein] + H(+). It carries out the reaction N(omega)-(1-hydroxy-2-oxoethyl)-L-arginyl-[protein] + H2O = L-arginyl-[protein] + glycolate + H(+). It catalyses the reaction N(6)-(1-hydroxy-2-oxoethyl)-L-lysyl-[protein] + H2O = glycolate + L-lysyl-[protein] + H(+). The catalysed reaction is S-(1-hydroxy-2-oxoethyl)-L-cysteinyl-[protein] + H2O = glycolate + L-cysteinyl-[protein] + H(+). The enzyme catalyses N(2)-(1-hydroxy-2-oxopropyl)-dGTP + H2O = lactate + dGTP + H(+). It carries out the reaction N(2)-(1-hydroxy-2-oxopropyl)-GTP + H2O = lactate + GTP + H(+). It catalyses the reaction N(2)-(1-hydroxy-2-oxopropyl)-GDP + H2O = lactate + GDP + H(+). The catalysed reaction is N(2)-(1-hydroxy-2-oxopropyl)-GMP + H2O = lactate + GMP + H(+). The enzyme catalyses N(2)-(1-hydroxy-2-oxoethyl)-dGTP + H2O = dGTP + glycolate + H(+). It carries out the reaction N(2)-(1-hydroxy-2-oxoethyl)-GTP + H2O = glycolate + GTP + H(+). It catalyses the reaction N(2)-(1-hydroxy-2-oxoethyl)-GDP + H2O = glycolate + GDP + H(+). The catalysed reaction is N(2)-(1-hydroxy-2-oxoethyl)-GMP + H2O = glycolate + GMP + H(+). The enzyme catalyses an N(2)-(1-hydroxy-2-oxopropyl)-guanosine in RNA + H2O = a guanosine in RNA + lactate + H(+). It carries out the reaction an N(2)-(1-hydroxy-2-oxopropyl)-2'-deoxyguanosine in DNA + H2O = a 2'-deoxyguanosine in DNA + lactate + H(+). It catalyses the reaction an N(2)-(1-hydroxy-2-oxoethyl)-guanosine in RNA + H2O = a guanosine in RNA + glycolate + H(+). The catalysed reaction is an N(2)-(1-hydroxy-2-oxoethyl)-2'-deoxyguanosine in DNA + H2O = a 2'-deoxyguanosine in DNA + glycolate + H(+). In terms of biological role, protein and nucleotide deglycase that catalyzes the deglycation of the Maillard adducts formed between amino groups of proteins or nucleotides and reactive carbonyl groups of glyoxals. Thus, functions as a protein deglycase that repairs methylglyoxal- and glyoxal-glycated proteins, and releases repaired proteins and lactate or glycolate, respectively. Deglycates cysteine, arginine and lysine residues in proteins, and thus reactivates these proteins by reversing glycation by glyoxals. Acts on early glycation intermediates (hemithioacetals and aminocarbinols), preventing the formation of Schiff bases and advanced glycation endproducts (AGE). Also functions as a nucleotide deglycase able to repair glycated guanine in the free nucleotide pool (GTP, GDP, GMP, dGTP) and in DNA and RNA. Is thus involved in a major nucleotide repair system named guanine glycation repair (GG repair), dedicated to reversing methylglyoxal and glyoxal damage via nucleotide sanitization and direct nucleic acid repair. Plays an important role in protecting cells from carbonyl stress. The sequence is that of Protein/nucleic acid deglycase HchA from Escherichia coli O8 (strain IAI1).